The sequence spans 366 residues: Endophilin-A (366 aa).

One can recognise a BAR domain in the interval 18–248; it reads TEKMGGAEGT…LQEKRSEAES (231 aa). Positions 227 to 247 form a coiled coil; that stretch reads QCADVLRGLQETLQEKRSEAE. The interval 266 to 295 is disordered; sequence GGGGGLNEDGTPSHISSSASPLPSPMRSPA. Positions 277-294 are enriched in low complexity; the sequence is PSHISSSASPLPSPMRSP. Residues 305-364 form the SH3 domain; it reads QQQPCCQALYDFDPENPGELGFKENDIITLLNRVDDNWYEGSVNGRTGYFPQSYVQVQVP.

This sequence belongs to the endophilin family.

It localises to the cytoplasm. The protein resides in the membrane. Required presynaptically at the neuromuscular junction. Implicated in synaptic vesicle endocytosis. In Drosophila willistoni (Fruit fly), this protein is Endophilin-A.